Reading from the N-terminus, the 436-residue chain is Nucleolar protein 4-like (436 aa).

The tract at residues Met-1 to Pro-184 is disordered. Low complexity predominate over residues Ser-41–Gln-61. Ser-130 carries the post-translational modification Phosphoserine. The segment covering Ala-160–Asp-169 has biased composition (acidic residues). Positions His-170 to Pro-184 are enriched in basic and acidic residues. Ser-295 carries the post-translational modification Phosphoserine. Over residues Gln-351–Thr-366 the composition is skewed to polar residues. The segment at Gln-351–Ser-400 is disordered. A compositionally biased stretch (low complexity) spans Ser-375–Thr-396.

The protein is Nucleolar protein 4-like (NOL4L) of Pongo abelii (Sumatran orangutan).